A 131-amino-acid polypeptide reads, in one-letter code: Methylglyoxal synthase (131 aa).

The 131-residue stretch at 1 to 131 (MKIALIAHDK…GDLDYRKLRK (131 aa)) folds into the MGS-like domain. Substrate is bound by residues His-8, Lys-12, 34 to 37 (TGTT), and 54 to 55 (SG). The active-site Proton donor/acceptor is the Asp-60. His-87 contributes to the substrate binding site.

It belongs to the methylglyoxal synthase family.

The catalysed reaction is dihydroxyacetone phosphate = methylglyoxal + phosphate. Functionally, catalyzes the formation of methylglyoxal from dihydroxyacetone phosphate. The polypeptide is Methylglyoxal synthase (Bacillus cereus (strain ATCC 14579 / DSM 31 / CCUG 7414 / JCM 2152 / NBRC 15305 / NCIMB 9373 / NCTC 2599 / NRRL B-3711)).